The sequence spans 710 residues: Solute carrier organic anion transporter family member 3A1 (710 aa).

Methionine 1 is subject to N-acetylmethionine. The span at 1 to 15 (MQGKKPGGSSGGGRS) shows a compositional bias: gly residues. A disordered region spans residues 1 to 25 (MQGKKPGGSSGGGRSGELQGDEAQR). At 1–40 (MQGKKPGGSSGGGRSGELQGDEAQRNKKKKKKVSCFSNIK) the chain is on the cytoplasmic side. A helical membrane pass occupies residues 41–60 (IFLVSECALMLAQGTVGAYL). The Extracellular segment spans residues 61-79 (VSVLTTLERRFNLQSADVG). Residues 80 to 100 (VIASSFEIGNLALILFVSYFG) form a helical membrane-spanning segment. The Cytoplasmic segment spans residues 101 to 106 (ARGHRP). A helical membrane pass occupies residues 107 to 131 (RLIGCGGIVMALGALLSALPEFLTH). Residues 132–174 (QYKYEAGEIRWGAEGRDVCATNGSSSDEGPDPDLICRNRTATN) are Extracellular-facing. Residues asparagine 153 and asparagine 169 are each glycosylated (N-linked (GlcNAc...) asparagine). Residues 175–203 (MMYLLLIGAQVLLGIGATPVQPLGVSYID) traverse the membrane as a helical segment. The Cytoplasmic portion of the chain corresponds to 204–222 (DHVRRKDSSLYIGILFTML). A helical transmembrane segment spans residues 223–243 (VFGPACGFILGSFCTKIYVDA). Residues 244 to 261 (VFIDTSNLDITPDDPRWI) lie on the Extracellular side of the membrane. Residues 262-286 (GAWWGGFLLCGALLFFSSLLMFGFP) traverse the membrane as a helical segment. At 287-344 (QSLPPHSDPGMESEQAMLPEREYERPKPSNGVLRHPLEPDSSASCFQQLRVIPKVTKH) the chain is on the cytoplasmic side. The chain crosses the membrane as a helical span at residues 345-366 (LLSNPVFTCIVLAACMEIAVVA). Residues 367-386 (GFAAFLGKYLEQQFNLTTSS) lie on the Extracellular side of the membrane. Asparagine 381 carries an N-linked (GlcNAc...) asparagine glycan. Residues 387 to 410 (ANQLLGMTAIPCACLGIFLGGLLV) form a helical membrane-spanning segment. Residues 411-414 (KKLS) lie on the Cytoplasmic side of the membrane. Residues 415-438 (LSALGAIRMAMLVNLVSTACYVSF) form a helical membrane-spanning segment. The Extracellular portion of the chain corresponds to 439–539 (LFLGCDTGPV…PGCQEAFLTF (101 aa)). Asparagine 457 carries N-linked (GlcNAc...) asparagine glycosylation. A Kazal-like domain is found at 465-513 (LDPYSPCNNNCECQTDSFTPVCGADGITYLSACFAGCNSTNLTGCACLT). 3 cysteine pairs are disulfide-bonded: cysteine 471–cysteine 497, cysteine 475–cysteine 486, and cysteine 477–cysteine 501. Residues asparagine 502, asparagine 505, and asparagine 519 are each glycosylated (N-linked (GlcNAc...) asparagine). The helical transmembrane segment at 540–562 (LCVMCVCSLIGAMAQTPSVIILI) threads the bilayer. At 563-571 (RTVSPELKS) the chain is on the cytoplasmic side. A helical transmembrane segment spans residues 572–597 (YALGVLFLLLRLLGFIPPPLIFGAGI). Topologically, residues 598–630 (DSTCLFWSTFCGEQGACVLYDNVVYRYLYVSIA) are extracellular. A helical transmembrane segment spans residues 631 to 648 (IALKSFAFILYTTTWQCL). Residues 649-705 (RKNYKRYIKNHEGGLSTSEFFASTLTLDNLGRDPVPAHQTHRTKFIYNLEDHEWCEN) are Cytoplasmic-facing.

Belongs to the organo anion transporter (TC 2.A.60) family. In terms of tissue distribution, widely expressed.

The protein localises to the basolateral cell membrane. It localises to the apical cell membrane. It is found in the basal cell membrane. It carries out the reaction L-thyroxine(out) = L-thyroxine(in). The catalysed reaction is prostaglandin E1(out) = prostaglandin E1(in). It catalyses the reaction prostaglandin E2(out) = prostaglandin E2(in). The enzyme catalyses prostaglandin F2alpha(out) = prostaglandin F2alpha(in). It carries out the reaction (5Z,8Z,11Z,14Z)-eicosatetraenoate(out) = (5Z,8Z,11Z,14Z)-eicosatetraenoate(in). The catalysed reaction is taurocholate(out) = taurocholate(in). It catalyses the reaction glycocholate(out) = glycocholate(in). The enzyme catalyses estrone 3-sulfate(out) = estrone 3-sulfate(in). It carries out the reaction argipressin(out) = argipressin(in). In terms of biological role, putative organic anion antiporter with apparent broad substrate specificity. Recognizes various substrates including thyroid hormone L-thyroxine, prostanoids such as prostaglandin E1 and E2, bile acids such as taurocholate, glycolate and glycochenodeoxycholate and peptide hormones such as L-arginine vasopressin, likely operating in a tissue-specific manner. The transport mechanism, its electrogenicity and potential tissue-specific counterions remain to be elucidated. This Mus musculus (Mouse) protein is Solute carrier organic anion transporter family member 3A1 (Slco3a1).